The sequence spans 591 residues: Frizzled-9 (591 aa).

Positions 1–22 (MAVAPLRGALLLWQLLAAGGAA) are cleaved as a signal peptide. Residues 23 to 229 (LEIGRFDPER…EVFWSRRDKD (207 aa)) are Extracellular-facing. Residues 34 to 155 (RGAAPCQAVE…NDPHALCMEA (122 aa)) form the FZ domain. Intrachain disulfides connect Cys-39–Cys-100, Cys-47–Cys-93, Cys-84–Cys-122, Cys-111–Cys-152, and Cys-115–Cys-139. A glycan (N-linked (GlcNAc...) asparagine) is linked at Asn-53. The segment at 58 to 172 (PNLLGHTSQG…PAEPHKGLGM (115 aa)) is required for Wnt-activated receptor activity. An N-linked (GlcNAc...) asparagine glycan is attached at Asn-158. A helical transmembrane segment spans residues 230–250 (FALVWMAVWSALCFFSTAFTV). Over 251-266 (LTFLLEPHRFQYPERP) the chain is Cytoplasmic. A helical transmembrane segment spans residues 267 to 287 (IIFLSMCYNVYSLAFLIRAVA). Over 288–315 (GAQSVACDQEAGALYVIQEGLENTGCTL) the chain is Extracellular. Residues 316-336 (VFLLLYYFGMASSLWWVVLTL) form a helical membrane-spanning segment. Over 337 to 355 (TWFLAAGKKWGHEAIEAHG) the chain is Cytoplasmic. A helical transmembrane segment spans residues 356–376 (SYFHMAAWGLPALKTIVILTL). Residues 377-400 (RKVAGDELTGLCYVASTDAAALTG) are Extracellular-facing. A helical membrane pass occupies residues 401–421 (FVLVPLSGYLVLGSSFLLTGF). The Cytoplasmic portion of the chain corresponds to 422 to 447 (VALFHIRKIMKTGGTNTEKLEKLMVK). Residues 448–468 (IGVFSILYTVPATCVIVCYVY) traverse the membrane as a helical segment. The Extracellular portion of the chain corresponds to 469–508 (ERLNMDFWRLRATEQPCAAAAGPGGRRDCSLPGGSVPTVA). The helical transmembrane segment at 509–529 (VFMLKIFMSLVVGITSGVWVW) threads the bilayer. Topologically, residues 530 to 591 (SSKTFQTWQS…DPSLENPTHL (62 aa)) are cytoplasmic. Positions 532 to 537 (KTFQTW) match the Lys-Thr-X-X-X-Trp motif, mediates interaction with the PDZ domain of Dvl family members motif. The tract at residues 554–591 (ACRAPGSYGRGTHCHYKAPTVVLHMTKTDPSLENPTHL) is required for CTNNB1 accumulation and TCF transcription factor activity.

This sequence belongs to the G-protein coupled receptor Fz/Smo family. In terms of processing, ubiquitinated by ZNRF3, leading to its degradation by the proteasome. In terms of tissue distribution, expressed predominantly in adult and fetal brain, testis, eye, skeletal muscle and kidney. Moderately expressed in pancreas, thyroid, adrenal cortex, small intestine and stomach. Detected in fetal liver and kidney. Expressed in neural progenitor cells.

The protein localises to the cell membrane. Receptor for WNT2 that is coupled to the beta-catenin canonical signaling pathway, which leads to the activation of disheveled proteins, inhibition of GSK-3 kinase, nuclear accumulation of beta-catenin and activation of Wnt target genes. Plays a role in neuromuscular junction (NMJ) assembly by negatively regulating the clustering of acetylcholine receptors (AChR) through the beta-catenin canonical signaling pathway. May play a role in neural progenitor cells (NPCs) viability through the beta-catenin canonical signaling pathway by negatively regulating cell cycle arrest leading to inhibition of neuron apoptotic process. During hippocampal development, regulates neuroblast proliferation and apoptotic cell death. Controls bone formation through non canonical Wnt signaling mediated via ISG15. Positively regulates bone regeneration through non canonical Wnt signaling. The protein is Frizzled-9 (FZD9) of Homo sapiens (Human).